The primary structure comprises 385 residues: AA13 family lytic polysaccharide monooxygenase aasA (385 aa).

Positions Met-1–Gly-18 are cleaved as a signal peptide. His-19 contributes to the Cu(2+) binding site. At His-19 the chain carries Methylhistidine. The interval His-19 to Ile-248 is N-terminal catalytic module. 7 cysteine pairs are disulfide-bonded: Cys-40–Cys-43, Cys-66–Cys-245, Cys-102–Cys-203, Cys-118–Cys-145, Cys-153–Cys-161, Cys-167–Cys-173, and Cys-181–Cys-192. His-109 provides a ligand contact to Cu(2+). Residue Asn-120 is glycosylated (N-linked (GlcNAc...) asparagine). A Cu(2+)-binding site is contributed by Tyr-242. The tract at residues Ser-254–Thr-276 is disordered. Over residues Ser-256–Thr-276 the composition is skewed to low complexity. The 108-residue stretch at Cys-278 to Arg-385 folds into the CBM20 domain. N-linked (GlcNAc...) asparagine glycosylation is present at Asn-364.

This sequence belongs to the polysaccharide monooxygenase AA13 family. Cu(2+) serves as cofactor. The catalytically essential N-terminal histidine His-19 is post-translationally modified by methylation to prevent protonation of the histidine side chain, and protect the critical active site of the enzyme from oxidative damage.

It localises to the secreted. The catalysed reaction is starch + reduced acceptor + O2 = D-glucono-1,5-lactone-terminated malto-oligosaccharides + short-chain malto-oligosaccharides + acceptor + H2O.. Starch-active polysaccharide monooxygenase that oxidizes the C1 position of starch substrates, but not in cellulose, chitin, polygalacturonan or esterified pectin, nor with Arabidopsis stem cell walls. Catalysis by LPMOs requires the reduction of the active-site copper from Cu(II) to Cu(I) by a reducing agent and H(2)O(2) or O(2) as a cosubstrate. The chain is AA13 family lytic polysaccharide monooxygenase aasA from Emericella nidulans (strain FGSC A4 / ATCC 38163 / CBS 112.46 / NRRL 194 / M139) (Aspergillus nidulans).